The following is a 176-amino-acid chain: Ribonuclease mitogillin (176 aa).

Positions 1–27 are cleaved as a signal peptide; that stretch reads MVAIKNLFLLAATAVSVLAAPSPLDAR. Disulfide bonds link C32-C174 and C102-C158. H76 is a catalytic residue. The active-site Proton acceptor is E122. Catalysis depends on H163, which acts as the Proton donor.

It belongs to the ribonuclease U2 family.

Its subcellular location is the secreted. Its function is as follows. This purine-specific ribonuclease cleaves 28S RNA in eukaryotic ribosomes, inhibits protein synthesis, and shows antitumor activity. The sequence is that of Ribonuclease mitogillin (mitF) from Aspergillus fumigatus (strain ATCC MYA-4609 / CBS 101355 / FGSC A1100 / Af293) (Neosartorya fumigata).